The following is a 78-amino-acid chain: Defensin-like protein 201 (78 aa).

A signal peptide spans 1-22; sequence MRNLINFAVLIMTIFIVSASGA. 4 disulfides stabilise this stretch: cysteine 32–cysteine 78, cysteine 41–cysteine 61, cysteine 46–cysteine 71, and cysteine 50–cysteine 73.

It belongs to the DEFL family.

The protein resides in the secreted. In Arabidopsis thaliana (Mouse-ear cress), this protein is Defensin-like protein 201.